The sequence spans 403 residues: Argininosuccinate synthase 1 (403 aa).

Residues 10–18 (SYSGGLDTS) and Ala-37 contribute to the ATP site. L-citrulline contacts are provided by Tyr-88 and Ser-93. An ATP-binding site is contributed by Gly-118. Positions 120, 124, and 125 each coordinate L-aspartate. Asn-124 is an L-citrulline binding site. L-citrulline-binding residues include Arg-128, Ser-179, Ser-188, Glu-264, and Tyr-276.

Belongs to the argininosuccinate synthase family. Type 1 subfamily. Homotetramer.

It localises to the cytoplasm. It catalyses the reaction L-citrulline + L-aspartate + ATP = 2-(N(omega)-L-arginino)succinate + AMP + diphosphate + H(+). Its pathway is amino-acid biosynthesis; L-arginine biosynthesis; L-arginine from L-ornithine and carbamoyl phosphate: step 2/3. In Rhizobium johnstonii (strain DSM 114642 / LMG 32736 / 3841) (Rhizobium leguminosarum bv. viciae), this protein is Argininosuccinate synthase 1.